The primary structure comprises 360 residues: Homoserine O-succinyltransferase (360 aa).

Catalysis depends on cysteine 146, which acts as the Acyl-thioester intermediate. Residues lysine 167 and serine 196 each coordinate substrate. Histidine 239 acts as the Proton acceptor in catalysis. Glutamate 241 is an active-site residue. Arginine 253 contacts substrate.

The protein belongs to the MetA family.

The protein localises to the cytoplasm. It carries out the reaction L-homoserine + succinyl-CoA = O-succinyl-L-homoserine + CoA. The protein operates within amino-acid biosynthesis; L-methionine biosynthesis via de novo pathway; O-succinyl-L-homoserine from L-homoserine: step 1/1. Transfers a succinyl group from succinyl-CoA to L-homoserine, forming succinyl-L-homoserine. In vitro, can also use glutaryl-CoA as acyl donor. This chain is Homoserine O-succinyltransferase, found in Thiothrix nivea (strain ATCC 35100 / DSM 5205 / JP2).